The chain runs to 247 residues: MYKLVLIRHGESTWNLENRFTGWTDVELTPTGVSQAQQAGRLLKEGGYEFDIAYTSVLKRAIWTLWHALDQMDRTWLPVAHSWRLNERHYGALQGLNKGDMAKQYGDAQVLIWRRSYDTPPPALEADDPRGQRQDVRYAKLDAEQVPLTECLKDTVARVLPFWNDSIAPAILSGKRVLIAAHGNSIRAMVKYLDGISDADIVNLNIPNGVPLVYELDADLKPIRSYYLGDAEAVAKAAAAVANQGKA.

Substrate contacts are provided by residues 8–15 (RHGESTWN), 21–22 (TG), R60, 87–90 (ERHY), K98, 114–115 (RR), and 183–184 (GN). Catalysis depends on H9, which acts as the Tele-phosphohistidine intermediate. Residue E87 is the Proton donor/acceptor of the active site.

It belongs to the phosphoglycerate mutase family. BPG-dependent PGAM subfamily. As to quaternary structure, homodimer.

The catalysed reaction is (2R)-2-phosphoglycerate = (2R)-3-phosphoglycerate. The protein operates within carbohydrate degradation; glycolysis; pyruvate from D-glyceraldehyde 3-phosphate: step 3/5. In terms of biological role, catalyzes the interconversion of 2-phosphoglycerate and 3-phosphoglycerate. The polypeptide is 2,3-bisphosphoglycerate-dependent phosphoglycerate mutase (Leptothrix cholodnii (strain ATCC 51168 / LMG 8142 / SP-6) (Leptothrix discophora (strain SP-6))).